The following is a 675-amino-acid chain: Regulator of G-protein signaling 9 (675 aa).

The 76-residue stretch at 30–105 (PETGVRMHNQ…PDSSLYRFQT (76 aa)) folds into the DEP domain. Residues 222-283 (VRKEIMYYQQ…DTQFWDLNAK (62 aa)) enclose the G protein gamma domain. In terms of domain architecture, RGS spans 299 to 414 (NFSELIRDPK…LKSPIYKEML (116 aa)). Disordered regions lie at residues 524-571 (RVAL…PPKA) and 637-662 (DSGTCLMDSDDPRAGESGDQTTEKEV). Over residues 542–551 (SGANSGPSVT) the composition is skewed to polar residues. Basic and acidic residues-rich tracts occupy residues 552 to 562 (ENREPSADHSR) and 646 to 662 (DDPRAGESGDQTTEKEV).

Heterodimer with GNB5. Interacts with RGS7BP, leading to regulate the subcellular location of the heterodimer formed with GNB5. Component of the RGS9-1-Gbeta5 complex composed of RGS9 (RGS9-1), Gbeta5 (GNB5) and RGS9BP. Interacts with PDE6G and GNAT1. Retinal isoform 1 is light-dependent phosphorylated at 'Ser-475'. Phosphorylation is decreased by light exposition. Interaction with RGS9BP is decreased when isoform 1 is phosphorylated at 'Ser-475'. Isoform 1 is expressed in photoreceptor outer segments. Isoform 2 is expressed in brain striatum.

It localises to the membrane. In terms of biological role, inhibits signal transduction by increasing the GTPase activity of G protein alpha subunits thereby driving them into their inactive GDP-bound form. Binds to GNAT1. Involved in phototransduction; key element in the recovery phase of visual transduction. The sequence is that of Regulator of G-protein signaling 9 (Rgs9) from Mus musculus (Mouse).